A 1690-amino-acid polypeptide reads, in one-letter code: Collagen alpha-4(IV) chain (1690 aa).

The signal sequence occupies residues 1–38 (MWSLHIVLMRCSFRLTKSLATGPWSLILILFSVQYVYG). The tract at residues 39–64 (SGKKYIGPCGGRDCSVCHCVPEKGSR) is 7S domain. Disordered stretches follow at residues 61–173 (KGSR…GEKG) and 187–258 (GDRG…GPTL). Residues 65–1459 (GPPGPPGPQG…IGDPGPKGFG (1395 aa)) form a triple-helical region region. Pro residues predominate over residues 66–75 (PPGPPGPQGP). Residues 76–88 (IGPLGAPGPIGLS) are compositionally biased toward low complexity. The short motif at 94-96 (RGD) is the Cell attachment site element. The N-linked (GlcNAc...) asparagine glycan is linked to asparagine 142. The short motif at 145–147 (RGD) is the Cell attachment site element. Over residues 149 to 164 (GFPGGRGALGPGGPLG) the composition is skewed to gly residues. Positions 189-191 (RGD) match the Cell attachment site motif. Over residues 199–208 (GSWGAGGPAG) the composition is skewed to gly residues. Residues 310-312 (RGD) carry the Cell attachment site motif. Disordered regions lie at residues 369–390 (PGDP…PGPP), 405–451 (GPPG…GLQG), and 469–1457 (GIKG…GPKG). Residues 412–434 (FPGLPGLPGEAGIPGRPDSAPGK) show a composition bias toward low complexity. 2 stretches are compositionally biased toward pro residues: residues 498–507 (PMGPPGPPGL) and 529–540 (PGPPGAEGPPGL). Positions 586–607 (HGRDGHAGEKGDPGPPGDHEDA) are enriched in basic and acidic residues. A compositionally biased stretch (low complexity) spans 644–655 (PGVPGHPGVRGP). N-linked (GlcNAc...) asparagine glycosylation is present at asparagine 669. The segment covering 681–690 (FDGPPGPKGF) has biased composition (pro residues). 2 consecutive short sequence motifs (cell attachment site) follow at residues 724-726 (RGD) and 785-787 (RGD). The segment covering 849–858 (GAPGGKGQPG) has biased composition (gly residues). 2 stretches are compositionally biased toward low complexity: residues 866–880 (AGMK…RPGA) and 907–917 (PRGLPGFPGFP). Positions 989–991 (RGD) match the Cell attachment site motif. Over residues 1023–1032 (PGPPGPPGPP) the composition is skewed to pro residues. The segment covering 1108–1117 (PGIQGPRGSP) has biased composition (low complexity). The span at 1119–1131 (RPGPPGSSGPPGC) shows a compositional bias: pro residues. The short motif at 1212–1214 (RGD) is the Cell attachment site element. Composition is skewed to pro residues over residues 1220–1243 (ISPP…PPGP), 1256–1280 (DPGP…PPGL), 1297–1309 (PGPP…PGPP), 1338–1353 (FPGP…PPGR), and 1443–1452 (GPGPPGPIGD). The 226-residue stretch at 1465 to 1690 (GFLLVLHSQT…SRCQVCVKYS (226 aa)) folds into the Collagen IV NC1 domain. 6 cysteine pairs are disulfide-bonded: cysteine 1480–cysteine 1569, cysteine 1513–cysteine 1566, cysteine 1525–cysteine 1531, cysteine 1588–cysteine 1686, cysteine 1622–cysteine 1683, and cysteine 1634–cysteine 1641.

This sequence belongs to the type IV collagen family. As to quaternary structure, there are six type IV collagen isoforms, alpha 1(IV)-alpha 6(IV), each of which can form a triple helix structure with 2 other chains to generate type IV collagen network. The alpha 3(IV) chain forms a triple helical protomer with alpha 4(IV) and alpha 5(IV); this triple helical structure dimerizes through NC1-NC1 domain interactions such that the alpha 3(IV), alpha 4(IV) and alpha 5(IV) chains of one protomer connect with the alpha 5(IV), alpha 4(IV) and alpha 3(IV) chains of the opposite protomer, respectively. Associates with LAMB2 at the neuromuscular junction and in GBM. Prolines at the third position of the tripeptide repeating unit (G-X-Y) are hydroxylated in some or all of the chains. Post-translationally, type IV collagens contain numerous cysteine residues which are involved in inter- and intramolecular disulfide bonding. 12 of these, located in the NC1 domain, are conserved in all known type IV collagens. In terms of processing, the trimeric structure of the NC1 domains is stabilized by covalent bonds between Lys and Met residues. As to expression, expressed in Bruch's membrane, outer plexiform layer, inner nuclear layer, inner plexiform layer, ganglion cell layer, inner limiting membrane and around the blood vessels of the retina (at protein level). Alpha 3 and alpha 4 type IV collagens are colocalized and present in kidney, eye, basement membranes of lens capsule, cochlea, lung, skeletal muscle, aorta, synaptic fibers, fetal kidney and fetal lung. PubMed:8083201 reports similar levels of expression of alpha 3 and alpha 4 type IV collagens in kidney, but PubMed:7523402 reports that in kidney levels of alpha 3 type IV collagen are significantly lower than those of alpha 4 type IV collagen. Highest levels of expression of alpha 4 type IV collagen are detected in kidney, calvaria, neuroretina and cardiac muscle. Lower levels of expression are observed in brain, lung and thymus, and no expression is detected in choroid plexus, liver, adrenal, pancreas, ileum or skin.

It is found in the secreted. The protein localises to the extracellular space. It localises to the extracellular matrix. Its subcellular location is the basement membrane. In terms of biological role, type IV collagen is the major structural component of glomerular basement membranes (GBM), forming a 'chicken-wire' meshwork together with laminins, proteoglycans and entactin/nidogen. The sequence is that of Collagen alpha-4(IV) chain (COL4A4) from Homo sapiens (Human).